Consider the following 442-residue polypeptide: Cytokine receptor-like factor 3 (442 aa).

Met-1 carries the N-acetylmethionine modification. Residues 10–57 are a coiled coil; sequence ELLLQEARENVEAAQSYRRELGHRLEGLREARRQIKESASQTRDVLKQ. The Fibronectin type-III domain occupies 181 to 274; the sequence is PPVQIEELIE…PQIGHSTLVP (94 aa).

Belongs to the cytokine receptor-like factor 3 family. In terms of tissue distribution, expressed in several embryonic and adult tissues, including adult and fetal brain, liver, spleen and pancreas. Expressed in adult, but not fetal kidney. Expressed in skin and squamous cell carcinoma (SCC) and in several other cancer types. Also detected in lesion actinic keratosis (AK).

The protein localises to the cytoplasm. May play a role in the negative regulation of cell cycle progression. This chain is Cytokine receptor-like factor 3 (CRLF3), found in Homo sapiens (Human).